The following is a 392-amino-acid chain: MMAGIVACILLVFVTVITAQPQAVFLEYIQGRMGVLEERIAQWHDQSSRFSGELRDFKNQVLKMLENIEKERDSLRNEMENTNVRVNRLEREVDYIETQNPAPPCVEIDEKLSDHHGAKKKKKEKYQKITDCSDTISQVTAMKILKRFGSSAGLWTKDLAGNSDRIYVFDGAGNDTVYMYPRMKEFTLSSPTRKAAKIRLPFPWIGTGHIVYDGNLYYIRQDNEFQVIKFSLANKTIIDSAVLPIEQQVPVYGLSKFNYIDIVADEEGLWVIYATKENEKNICLAKLDPSSLSIEQMWDTPCPIENAESAFVVCGSLYVVYNTKLPSRSRIQCVFDVSGTISSENVPIVYFPKRYGSHSSMKYNPREKQIYAWDDGYQIIYKLNMKHRDELY.

An N-terminal signal peptide occupies residues 1–19 (MMAGIVACILLVFVTVITA). Positions 52-100 (GELRDFKNQVLKMLENIEKERDSLRNEMENTNVRVNRLEREVDYIETQN) form a coiled coil. The Olfactomedin-like domain maps to 131–387 (DCSDTISQVT…QIIYKLNMKH (257 aa)). A disulfide bridge connects residues Cys-132 and Cys-314. Asn-174 and Asn-234 each carry an N-linked (GlcNAc...) asparagine glycan.

This sequence belongs to the OLFML3 family. Interacts (via coiled coil domain) with BMP1 and (via olfactomedin-like domain) CHRD.

Its subcellular location is the secreted. Functionally, secreted scaffold protein that plays an essential role in dorsoventral patterning during early development. Stabilizes axial formation by restricting chordin (CHRD) activity on the dorsal side. Acts by facilitating the association between the tolloid protease BMP1 and its substrate chordin (CHRD), leading to enhance chordin (CHRD) degradation by BMP1. This is Olfactomedin-like protein 3 (olfml3) from Xenopus laevis (African clawed frog).